The following is a 154-amino-acid chain: SsrA-binding protein (154 aa).

The disordered stretch occupies residues 134-154 (DKREDIKKRDQERELSRRFKN).

The protein belongs to the SmpB family.

It localises to the cytoplasm. Functionally, required for rescue of stalled ribosomes mediated by trans-translation. Binds to transfer-messenger RNA (tmRNA), required for stable association of tmRNA with ribosomes. tmRNA and SmpB together mimic tRNA shape, replacing the anticodon stem-loop with SmpB. tmRNA is encoded by the ssrA gene; the 2 termini fold to resemble tRNA(Ala) and it encodes a 'tag peptide', a short internal open reading frame. During trans-translation Ala-aminoacylated tmRNA acts like a tRNA, entering the A-site of stalled ribosomes, displacing the stalled mRNA. The ribosome then switches to translate the ORF on the tmRNA; the nascent peptide is terminated with the 'tag peptide' encoded by the tmRNA and targeted for degradation. The ribosome is freed to recommence translation, which seems to be the essential function of trans-translation. This is SsrA-binding protein from Leuconostoc mesenteroides subsp. mesenteroides (strain ATCC 8293 / DSM 20343 / BCRC 11652 / CCM 1803 / JCM 6124 / NCDO 523 / NBRC 100496 / NCIMB 8023 / NCTC 12954 / NRRL B-1118 / 37Y).